The chain runs to 155 residues: S-ribosylhomocysteine lyase (155 aa).

Positions 53, 57, and 121 each coordinate Fe cation.

This sequence belongs to the LuxS family. Homodimer. The cofactor is Fe cation.

It carries out the reaction S-(5-deoxy-D-ribos-5-yl)-L-homocysteine = (S)-4,5-dihydroxypentane-2,3-dione + L-homocysteine. In terms of biological role, involved in the synthesis of autoinducer 2 (AI-2) which is secreted by bacteria and is used to communicate both the cell density and the metabolic potential of the environment. The regulation of gene expression in response to changes in cell density is called quorum sensing. Catalyzes the transformation of S-ribosylhomocysteine (RHC) to homocysteine (HC) and 4,5-dihydroxy-2,3-pentadione (DPD). The sequence is that of S-ribosylhomocysteine lyase from Thermus thermophilus (strain ATCC BAA-163 / DSM 7039 / HB27).